The primary structure comprises 441 residues: Eukaryotic translation initiation factor 3 subunit E (441 aa).

In terms of domain architecture, PCI spans 223 to 407 (IFFNHDNGRT…GTVIMEPTQP (185 aa)).

Belongs to the eIF-3 subunit E family. Component of the eukaryotic translation initiation factor 3 (eIF-3) complex (Potential). Binds to the translation initiation factors TIF3F1 and TIF3H1. Associates with the CSN (COP9 signalosome) complex. Interacts directly with CSN1, CSN4, CSN6A, CSN6B, CSN7, CSN8 and TIF3C1. Binds to 40S small ribosomal subunit S9 (RPS9B and RPS9C) via its N-terminal part. Interacts with the 26S proteasome subunit RPN12a via its C-terminal part. Also binds with At1g27930 and At4g30620.

The protein localises to the cytoplasm. It is found in the nucleus. Functionally, component of the eukaryotic translation initiation factor 3 (eIF-3) complex, which is involved in protein synthesis of a specialized repertoire of mRNAs and, together with other initiation factors, stimulates binding of mRNA and methionyl-tRNAi to the 40S ribosome. The eIF-3 complex specifically targets and initiates translation of a subset of mRNAs involved in cell proliferation (Potential). Negatively regulates translation during flower development. The polypeptide is Eukaryotic translation initiation factor 3 subunit E (Arabidopsis thaliana (Mouse-ear cress)).